Consider the following 235-residue polypeptide: Protein FEV (235 aa).

Positions 58 to 138 form a DNA-binding region, ETS; the sequence is IQLWQFLLEL…HGKRYAYKFD (81 aa).

The protein belongs to the ETS family. Expressed by serotonergic neurons in anterior and posterior raphe.

It is found in the nucleus. In terms of biological role, functions as a transcriptional regulator. Functions in the differentiation and the maintenance of the central serotonergic neurons. May play a role in cell growth. The sequence is that of Protein FEV (fev) from Danio rerio (Zebrafish).